The following is a 695-amino-acid chain: MSDKECTVFVLDLGKDMGTCHHGRSHSDLEWTLSYFHDELSHKFLANRKTDVVGIVGYKCDDTKNDLAEQEAYWNISVLYPIQTALFSKLQSVSQTLKPSNTMQGDLISAIVVSFDLMARHCKKNKWKKKMIVLTAARGIIDFSDYIGIAEQLLQHDVFLGVYGVDFDQEDINYSEPLKESQKKENEVRIQEFVESCHGQYCTFQQIYNNIGKPWVRKVRPVAIFRGTFSIGNRDSKDTSISIQVERYPRTRLTKPPTSSAFYENDMSKNYECLNIENSNVENKSMESDAVSTVRSYMVRDPKTNDSFEVKREDLESGYSYGRTIVPISRSDEDVLALDTIPGYEILGFIPKSSLPIYYTISDTNIIVPKDDFESKLNFSAFVQSLEREHRYALARFVSKDKGVPVLLVLMPYVEFKRHYLVDIQLPFAEDVRPYSFSEFEKLSNEEDMRQIDFAVSNYIDNMDLDSSDCGFNPPFEPENTFSMIPHRLQQAISYYANSPEGDLPQPNIYLTRYTNPPKSLLDNCILDLKLIKEKLTVNVPVKPKYSSQETAFDTGAPISEEQIEELLNSGLDEQEGEKLLVLHVSEKDPVGTFTEVLKNPFGLEDALTEMEKVIKNLIDKSKYDLALQSLQSLRLHSILEDEVERFNEYLTRLKKDVMQNNKPKENELINKIRSSGLDIILHDELTRHDNFNNI.

Residues 229 to 461 enclose the Ku domain; the sequence is FSIGNRDSKD…IDFAVSNYID (233 aa).

Belongs to the ku80 family. Heterodimer of pku70 and pku80.

The protein localises to the nucleus. The protein resides in the chromosome. It is found in the telomere. It catalyses the reaction ATP + H2O = ADP + phosphate + H(+). Functionally, single-stranded DNA-dependent ATP-dependent helicase. Involved in non-homologous end joining (NHEJ) DNA double strand break repair. DNA-binding is sequence-independent but has a high affinity to nicks in double-stranded DNA and to the ends of duplex DNA. Binds to naturally occurring chromosomal ends, and therefore provides chromosomal end protection. Required also for telomere recombination to repair telomeric ends in the absence of telomerase. ku70, of the ku70/ku80 heterodimer, binds to the stem loop of tlc1, the RNA component of telomerase. Involved in telomere maintenance. Interacts with telomeric repeats and subtelomeric sequences thereby controlling telomere length and protecting against subtelomeric rearrangement. Required for mating-type switching. The protein is ATP-dependent DNA helicase II subunit 2 (pku80) of Schizosaccharomyces pombe (strain 972 / ATCC 24843) (Fission yeast).